Reading from the N-terminus, the 104-residue chain is Nucleoid-associated protein PEPE_1483 (104 aa).

Positions 1-35 are disordered; it reads MRGGMGNMQSMMRQMQKMQKKVTEEQEKLNQTEFT. The segment covering 8–17 has biased composition (low complexity); sequence MQSMMRQMQK. Positions 21 to 30 are enriched in basic and acidic residues; it reads KVTEEQEKLN.

It belongs to the YbaB/EbfC family. Homodimer.

The protein resides in the cytoplasm. It localises to the nucleoid. In terms of biological role, binds to DNA and alters its conformation. May be involved in regulation of gene expression, nucleoid organization and DNA protection. The sequence is that of Nucleoid-associated protein PEPE_1483 from Pediococcus pentosaceus (strain ATCC 25745 / CCUG 21536 / LMG 10740 / 183-1w).